The sequence spans 38 residues: Kappa-actitoxin-Bcs3a (38 aa).

The 36-residue stretch at 2-37 folds into the ShKT domain; that stretch reads CIDRFPTGTCKHVKKGGSCKNSQKYRINCAKTCGLC. Disulfide bonds link cysteine 2–cysteine 37, cysteine 11–cysteine 30, and cysteine 20–cysteine 34. The segment at 25–26 is crucial for binding to potassium channels; it reads KY.

It belongs to the sea anemone type 1 potassium channel toxin family. Type 1b subfamily.

The protein resides in the secreted. Its subcellular location is the nematocyst. Its function is as follows. Inhibits voltage-gated potassium channels (IC(50)=405.0 nM for rKCNA1/Kv1.1, IC(50)=0.03 nM for rKCNA2/Kv1.2, IC(50)=1.31 nM for rKCNA6/Kv1.6, IC(50)=74.11 nM for hKCNA3/Kv1.3, and IC(50)=247.69 nM for insect Shaker IR). Binds the Shaker IR channels in a voltage-independent manner. The protein is Kappa-actitoxin-Bcs3a of Bunodosoma caissarum (Sea anemone).